Reading from the N-terminus, the 471-residue chain is Cysteine--tRNA ligase (471 aa).

C29 serves as a coordination point for Zn(2+). The 'HIGH' region motif lies at 31 to 41; the sequence is PTVYNYIHIGN. 3 residues coordinate Zn(2+): C209, H234, and E238. The short motif at 266-270 is the 'KMSKS' region element; sequence KMSKS. Position 269 (K269) interacts with ATP.

Belongs to the class-I aminoacyl-tRNA synthetase family. As to quaternary structure, monomer. Requires Zn(2+) as cofactor.

It localises to the cytoplasm. It carries out the reaction tRNA(Cys) + L-cysteine + ATP = L-cysteinyl-tRNA(Cys) + AMP + diphosphate. The chain is Cysteine--tRNA ligase from Listeria monocytogenes serovar 1/2a (strain ATCC BAA-679 / EGD-e).